An 836-amino-acid polypeptide reads, in one-letter code: Ethylene receptor 3 (836 aa).

Helical transmembrane passes span 137–157 (LIAA…AGLR), 166–186 (LVQF…TAFT), and 204–224 (LTAL…PQLL). Cu cation contacts are provided by Cys-176 and His-180. The GAF domain occupies 269–413 (DRHTVLYTTL…VVAGQVAVAL (145 aa)). The stretch at 416–452 (ATLLEESRAMRDRLAEQNRELLQARRDALMANEARQA) forms a coiled coil. A Histidine kinase domain is found at 457-691 (MSQGMRRPIH…LVLRFQLQSP (235 aa)). Residues 718 to 834 (LLIDDDDDIN…LKDELARILQ (117 aa)) enclose the Response regulatory domain.

Belongs to the ethylene receptor family. Cu cation is required as a cofactor.

Its subcellular location is the endoplasmic reticulum membrane. It carries out the reaction ATP + protein L-histidine = ADP + protein N-phospho-L-histidine.. Ethylene receptor related to bacterial two-component regulators. Acts as a negative regulator of ethylene signaling. May delay the transition from the vegetative stage to the floral stage by up-regulating GI (GIGANTEA) and RCN1 and cause starch accumulation in stems by down-regulating the alpha-amylase AMY3D. The protein is Ethylene receptor 3 (ETR3) of Oryza sativa subsp. japonica (Rice).